The primary structure comprises 51 residues: Large ribosomal subunit protein bL33 (51 aa).

This sequence belongs to the bacterial ribosomal protein bL33 family.

The polypeptide is Large ribosomal subunit protein bL33 (Vesicomyosocius okutanii subsp. Calyptogena okutanii (strain HA)).